Consider the following 1171-residue polypeptide: MSMVYLASGDSNANIEYQTISSTATQQLTQEQSERLHDRITKAQLQKLYDLFKSSPDQMVGYSELRHMLEDVDITFTDYTYTRLFLKINQNSDFMIDWNEFVSYLIFGFQEEDPSSQKEALTMPISAPPVVRKTEHRSAVCCITLLKVKSDQTPMEEIPELSANYSFGGEDSPENSGMWVTASREGQLRFWSAHMEPLRSAVSESSNLPYAVYCMSYAFYNNGKTHSKLVLGDYAGNVRILSYSPYLRGPFQAKPGAALVELVWADVLKGRIPLLIPREHINLHSELISCVYYSLHMNTLFASAEYRNTKKYRGRCPGLIMVSNDDRNNFRIPLGVSVFYVAESKNILVTGGPDTFVRIWDVYISSEPSAILTGHNGGIVAVFVQPEENKVYSVDYHKVIKVWDLQEHTLLQTFGELVRIIHHSETDIKYYYHSHLRDLLVAGRKLIQIKCCPRVRVDLTDGNTHAAPVSVVLYNRLFRNIVTCGLDSYIIVWDPWTGRRKIIMKNCHTKMIYGEIIDIEITAACFDPLEQFLLTGARDGSLKIWNYNNAVVVRNMSIQPDQEVTAVIWVIDRILAMGWDRQVTEFNDVAGREYGDPKKWAKFHTDDITCADVKLGEGVVTATYSGEIIFWKLETGQPYRRYNVMNPYQFIELKLNTEEEKLTRRSKRISSLMGAGRRTLVLQNFKPDEIKDYGANIPVSVQAVLFLQKRPMTKDHGSVFISLDTGYIQVYSHHQHGGFIKQFFAVHKVGDCVLTMASDRKNRFLYTGTAFGYIKIWHIVNYCIPQAEKTEVCMPRLRLDFIFLRKDLFLTRAKRVIRNQPEPMLVSSYKGHLKAINSIGFINLPKILFTGSHDYSCRLWTQGGRYLGTLGTVLPWSKLTPFERAGEDNRAYRLPPDIKKVASSTTLKVISGIQHTGTVKRAKAVDEREDERDVEEAASDVKNMFDRPLREPILGHHFQLPGRSVIEQRIDLDTTELCIPVYTHLRVYPSEMMEHLPTPPVIGQVRAENYLDHYMPVVGKVDPHDSAINIREPQKRAKAGSSSLLPARAGYSLGKPKTNSVLGMPRSSGAGLCKPRTSFTLSDYTPGNPKADFSSRNMKSNLSSGSPKAGIPKADSSHGSAKASCRLGSPKPDYISIKKRASFSPGTTPKTDFSPKAGKPKTNTMKSSNSH.

8 WD repeats span residues 157–201, 331–370, 374–413, 464–503, 516–555, 603–643, 748–787, and 831–870; these read EIPE…LRSA, RIPL…EPSA, GHNG…LLQT, THAA…RKII, IIDI…VVRN, FHTD…RRYN, KVGD…IPQA, and GHLK…LGTL. Positions 1076–1171 are disordered; sequence RTSFTLSDYT…TNTMKSSNSH (96 aa). Polar residues-rich tracts occupy residues 1094–1106 and 1161–1171; these read SSRN…SSGS and KTNTMKSSNSH.

This is WD repeat-containing protein on Y chromosome from Drosophila grimshawi (Hawaiian fruit fly).